The chain runs to 605 residues: Pyruvate decarboxylase 2 (605 aa).

Residues D68 and H155 each contribute to the substrate site. The tract at residues 433 to 515 (DSWFNCQKLK…FLINNGGYTI (83 aa)) is thiamine pyrophosphate binding. Mg(2+) contacts are provided by D483, N510, and G512. Position 516 (E516) interacts with substrate.

The protein belongs to the TPP enzyme family. In terms of assembly, homotetramer. A metal cation is required as a cofactor. The cofactor is thiamine diphosphate.

It catalyses the reaction a 2-oxocarboxylate + H(+) = an aldehyde + CO2. The protein is Pyruvate decarboxylase 2 (PDC2) of Oryza sativa subsp. japonica (Rice).